The sequence spans 186 residues: ADP-ribosylation factor-like protein alp41 (186 aa).

Gly2 carries the N-myristoyl glycine lipid modification. GTP-binding positions include Gly23–Thr30, Asp66–Gln70, and Asn125–Asp128.

The protein belongs to the small GTPase superfamily. Arf family.

Its subcellular location is the cytoplasm. It is found in the cytoskeleton. Has a role in the cofactor-dependent pathway of microtubule biogenesis. Required for growth polarity control. The polypeptide is ADP-ribosylation factor-like protein alp41 (alp41) (Schizosaccharomyces pombe (strain 972 / ATCC 24843) (Fission yeast)).